The sequence spans 694 residues: Elongation factor G 2 (694 aa).

One can recognise a tr-type G domain in the interval 6 to 282 (SKLRNIGISA…GVVDYLPDPT (277 aa)). GTP contacts are provided by residues 15 to 22 (AHIDSGKT), 82 to 86 (DTPGH), and 136 to 139 (NKCD).

This sequence belongs to the TRAFAC class translation factor GTPase superfamily. Classic translation factor GTPase family. EF-G/EF-2 subfamily.

It localises to the cytoplasm. Functionally, catalyzes the GTP-dependent ribosomal translocation step during translation elongation. During this step, the ribosome changes from the pre-translocational (PRE) to the post-translocational (POST) state as the newly formed A-site-bound peptidyl-tRNA and P-site-bound deacylated tRNA move to the P and E sites, respectively. Catalyzes the coordinated movement of the two tRNA molecules, the mRNA and conformational changes in the ribosome. The chain is Elongation factor G 2 from Anaeromyxobacter dehalogenans (strain 2CP-C).